Consider the following 728-residue polypeptide: Cytosolic endo-beta-N-acetylglucosaminidase (728 aa).

The BRCT domain maps to 287–381; it reads QNRVFFDACD…NFLLNEDKFW (95 aa).

It belongs to the glycosyl hydrolase 85 family.

The protein resides in the cytoplasm. The protein localises to the cytosol. The enzyme catalyses an N(4)-(oligosaccharide-(1-&gt;3)-[oligosaccharide-(1-&gt;6)]-beta-D-Man-(1-&gt;4)-beta-D-GlcNAc-(1-&gt;4)-alpha-D-GlcNAc)-L-asparaginyl-[protein] + H2O = an oligosaccharide-(1-&gt;3)-[oligosaccharide-(1-&gt;6)]-beta-D-Man-(1-&gt;4)-D-GlcNAc + N(4)-(N-acetyl-beta-D-glucosaminyl)-L-asparaginyl-[protein]. In terms of biological role, endoglycosidase that releases N-glycans from glycoproteins by cleaving the beta-1,4-glycosidic bond in the N,N'-diacetylchitobiose core. Involved in the processing of free oligosaccharides in the cytosol. In Gallus gallus (Chicken), this protein is Cytosolic endo-beta-N-acetylglucosaminidase (ENGASE).